Consider the following 143-residue polypeptide: Transcriptional regulator MraZ (143 aa).

2 SpoVT-AbrB domains span residues 5–47 (SHTP…PMAE) and 76–119 (AADD…DAQR).

This sequence belongs to the MraZ family. In terms of assembly, forms oligomers.

The protein resides in the cytoplasm. The protein localises to the nucleoid. The polypeptide is Transcriptional regulator MraZ (Frankia alni (strain DSM 45986 / CECT 9034 / ACN14a)).